The primary structure comprises 254 residues: 4-hydroxy-tetrahydrodipicolinate reductase (254 aa).

Residue 7 to 12 (GASGRI) participates in NAD(+) binding. Arg35 contributes to the NADP(+) binding site. NAD(+) contacts are provided by residues 91 to 93 (GTT) and 115 to 118 (AHNM). His147 acts as the Proton donor/acceptor in catalysis. A (S)-2,3,4,5-tetrahydrodipicolinate-binding site is contributed by His148. Lys151 serves as the catalytic Proton donor. 157–158 (GT) lines the (S)-2,3,4,5-tetrahydrodipicolinate pocket.

It belongs to the DapB family.

It is found in the cytoplasm. It catalyses the reaction (S)-2,3,4,5-tetrahydrodipicolinate + NAD(+) + H2O = (2S,4S)-4-hydroxy-2,3,4,5-tetrahydrodipicolinate + NADH + H(+). The catalysed reaction is (S)-2,3,4,5-tetrahydrodipicolinate + NADP(+) + H2O = (2S,4S)-4-hydroxy-2,3,4,5-tetrahydrodipicolinate + NADPH + H(+). It functions in the pathway amino-acid biosynthesis; L-lysine biosynthesis via DAP pathway; (S)-tetrahydrodipicolinate from L-aspartate: step 4/4. In terms of biological role, catalyzes the conversion of 4-hydroxy-tetrahydrodipicolinate (HTPA) to tetrahydrodipicolinate. The protein is 4-hydroxy-tetrahydrodipicolinate reductase of Helicobacter acinonychis (strain Sheeba).